We begin with the raw amino-acid sequence, 369 residues long: Delta(12)-oleate desaturase (369 aa).

Transmembrane regions (helical) follow at residues 41-61 and 69-89; these read LLSD…YFPL and IAWP…WVIA. Residues 90 to 94 carry the Histidine box-1 motif; it reads HECGH. The helical transmembrane segment at 102–122 threads the bilayer; that stretch reads LIDDIVGLFFHSALLVPYFSW. The Histidine box-2 signature appears at 126-130; the sequence is HRRHH. A run of 3 helical transmembrane segments spans residues 164–184, 207–227, and 234–254; these read LISL…FNMS, WIQV…LYRI, and FWVM…LVLI. The Histidine box-3 signature appears at 300 to 304; that stretch reads HVVHH.

It belongs to the fatty acid desaturase type 1 family.

It localises to the membrane. It participates in lipid metabolism; polyunsaturated fatty acid biosynthesis. Delta(12)-fatty acid desaturase producing in a heterologous system linoleic acid (18:2(9Z,12Z)) and to a lower extent hexadecadienoic acid (16:2(9Z,12Z)). The chain is Delta(12)-oleate desaturase from Trichosanthes kirilowii (Chinese snake gourd).